A 249-amino-acid polypeptide reads, in one-letter code: 2,3-bisphosphoglycerate-dependent phosphoglycerate mutase (249 aa).

Substrate is bound by residues 11 to 18 (RHGESDWN), 24 to 25 (TG), Arg63, 90 to 93 (ERHY), Lys101, 117 to 118 (RR), and 184 to 185 (GN). His12 serves as the catalytic Tele-phosphohistidine intermediate. Glu90 functions as the Proton donor/acceptor in the catalytic mechanism.

This sequence belongs to the phosphoglycerate mutase family. BPG-dependent PGAM subfamily.

It carries out the reaction (2R)-2-phosphoglycerate = (2R)-3-phosphoglycerate. It functions in the pathway carbohydrate degradation; glycolysis; pyruvate from D-glyceraldehyde 3-phosphate: step 3/5. Catalyzes the interconversion of 2-phosphoglycerate and 3-phosphoglycerate. In Mycobacterium bovis (strain BCG / Pasteur 1173P2), this protein is 2,3-bisphosphoglycerate-dependent phosphoglycerate mutase.